A 299-amino-acid polypeptide reads, in one-letter code: NAD kinase (299 aa).

Aspartate 78 functions as the Proton acceptor in the catalytic mechanism. NAD(+) is bound by residues 78-79 (DG), 151-152 (ND), lysine 162, arginine 179, aspartate 181, 192-197 (TAYALS), and glutamine 252.

The protein belongs to the NAD kinase family. Requires a divalent metal cation as cofactor.

It is found in the cytoplasm. The enzyme catalyses NAD(+) + ATP = ADP + NADP(+) + H(+). Its function is as follows. Involved in the regulation of the intracellular balance of NAD and NADP, and is a key enzyme in the biosynthesis of NADP. Catalyzes specifically the phosphorylation on 2'-hydroxyl of the adenosine moiety of NAD to yield NADP. In Coxiella burnetii (strain CbuG_Q212) (Coxiella burnetii (strain Q212)), this protein is NAD kinase.